Here is a 108-residue protein sequence, read N- to C-terminus: Small ribosomal subunit protein bS6 (108 aa).

It belongs to the bacterial ribosomal protein bS6 family.

In terms of biological role, binds together with bS18 to 16S ribosomal RNA. The chain is Small ribosomal subunit protein bS6 from Nostoc sp. (strain PCC 7120 / SAG 25.82 / UTEX 2576).